The primary structure comprises 427 residues: MPVSLLRALLVFSLLCLGLSATRAAHAAMEIEVVGGAANKIAIAMVPFQTAAGQPSPPLTQIVADDLARSGQFSMTDVTGAAQPVEPSQVDYAAWRTKGAEAMVIGQVVALGGGRFEVRFRLLDVVKGTQLAGYSYKITAAQWRATGHRIADVVYEKLTGIPGAFSSRIAYVQKQGKRYELRVADADGQNPRTIVRSLEPLISPMFSPDGTRLAYVSFEDKKPVVYVQSLQQGGRRKVAAFKGSNSAPAWSPDGRQLAVVLTRDGASQIYLINVDGSGLTRLMRSGDIDTEPVFSPDGQTLYFTSDRGGSPQIYRVAKSGGDAKRVSFEGSYNVSPTISPDGRYLAYISRDGGRFRVVLQELASGQTRVLTETTRDEAPSFAPNGQAVLYATVQGGRGVLGTVTLDGKTRARLSESGVDAREPAWGP.

The N-terminal stretch at 1–27 (MPVSLLRALLVFSLLCLGLSATRAAHA) is a signal peptide.

The protein belongs to the TolB family. The Tol-Pal system is composed of five core proteins: the inner membrane proteins TolA, TolQ and TolR, the periplasmic protein TolB and the outer membrane protein Pal. They form a network linking the inner and outer membranes and the peptidoglycan layer.

It is found in the periplasm. Part of the Tol-Pal system, which plays a role in outer membrane invagination during cell division and is important for maintaining outer membrane integrity. In Thiobacillus denitrificans (strain ATCC 25259 / T1), this protein is Tol-Pal system protein TolB.